The sequence spans 303 residues: Glycosyltransferase AglJ (303 aa).

The next 2 helical transmembrane spans lie at 230 to 250 and 263 to 283; these read FYFGSVGFASTATGLGLALYV and VIAVVSMAGILFGVQLLMFGV.

Belongs to the glycosyltransferase 2 family.

It is found in the cell membrane. The protein operates within cell surface structure biogenesis; S-layer biogenesis. Involved in the assembly of a N-linked pentasaccharide that decorates the S-layer glycoprotein and flagellins. Adds the first hexose subunit of the pentasaccharide to the dolichol phosphate carrier. The sequence is that of Glycosyltransferase AglJ (aglJ) from Haloferax volcanii (strain ATCC 29605 / DSM 3757 / JCM 8879 / NBRC 14742 / NCIMB 2012 / VKM B-1768 / DS2) (Halobacterium volcanii).